Here is a 453-residue protein sequence, read N- to C-terminus: MNKDIFLTNNLNNKKEKFVPINKENIGMYVCGPTVYDNPHIGNARPLVIFDILFKVLKSKYGHDKINYIRNITDVDDKIIKSAKEKNLSISELTNNVIKDFNDDCNYLNLDNPSQQPKATDHIDLMIKMISTLIEKDFAYVVNDHVYFEVSKFDDYGKLSNKKLEDLIAGSRVEVSDNKKKSEDFVLWKPSKDDEPSWDSPWGKGRPGWHLECSAMSKKYLGNVFDIHGGGIDLIFPHHENEIAQSRCANDSKVFANYWIHNAFITMSNEKMAKSTGNILKIKDFKDNVDGQVLKLALMSAHYKQPLDWNEKLLEDCKNTIDKWYEVYLPPKDKIVLDEDILSPLYDDLNTPGYIAKLHQLYDKALKGGNEEKSLFVLACNFIGILNKTKEEWIEFKKKKSSINEDDILEMISLRNKAREDKNYKEADIIRNKLLDKGVLIEDKDGKTIWKLK.

Zn(2+) is bound at residue cysteine 31. Positions 33-43 (PTVYDNPHIGN) match the 'HIGH' region motif. 3 residues coordinate Zn(2+): cysteine 213, histidine 238, and glutamate 242. The short motif at 271–275 (KMAKS) is the 'KMSKS' region element. Lysine 274 serves as a coordination point for ATP.

This sequence belongs to the class-I aminoacyl-tRNA synthetase family. Monomer. Zn(2+) serves as cofactor.

It is found in the cytoplasm. The catalysed reaction is tRNA(Cys) + L-cysteine + ATP = L-cysteinyl-tRNA(Cys) + AMP + diphosphate. This is Cysteine--tRNA ligase from Pelagibacter ubique (strain HTCC1062).